The primary structure comprises 162 residues: Lipoprotein signal peptidase (162 aa).

The next 4 helical transmembrane spans lie at 12 to 32 (WFAL…YFNS), 42 to 62 (VVEG…FSFL), 66 to 86 (GGWQ…WLGW), and 93 to 113 (FSGL…GNVI). Catalysis depends on residues Asp123 and Asp142. A helical transmembrane segment spans residues 133–153 (WYYPAFNLADSFICVGAALMV).

This sequence belongs to the peptidase A8 family.

Its subcellular location is the cell inner membrane. The enzyme catalyses Release of signal peptides from bacterial membrane prolipoproteins. Hydrolyzes -Xaa-Yaa-Zaa-|-(S,diacylglyceryl)Cys-, in which Xaa is hydrophobic (preferably Leu), and Yaa (Ala or Ser) and Zaa (Gly or Ala) have small, neutral side chains.. Its pathway is protein modification; lipoprotein biosynthesis (signal peptide cleavage). Its function is as follows. This protein specifically catalyzes the removal of signal peptides from prolipoproteins. This chain is Lipoprotein signal peptidase, found in Chromobacterium violaceum (strain ATCC 12472 / DSM 30191 / JCM 1249 / CCUG 213 / NBRC 12614 / NCIMB 9131 / NCTC 9757 / MK).